We begin with the raw amino-acid sequence, 460 residues long: Vitamin K-dependent protein C (460 aa).

Residues 1-18 form the signal peptide; it reads MWQFRVFLLLMSTWGISS. Residues 19 to 41 constitute a propeptide that is removed on maturation; that stretch reads IPAHPDPVFSSSEHAHQVLRVRR. The region spanning 42 to 87 is the Gla domain; sequence ANSFLEEMRPGSLERECMEEICDFEEAQEIFQNVEDTLAFWIKYFD. 4-carboxyglutamate occurs at positions 47, 48, 55, 57, 60, 61, 66, 67, 70, and 76. Cysteines 58 and 63 form a disulfide. Cystine bridges form between Cys-91–Cys-110, Cys-100–Cys-105, Cys-104–Cys-119, Cys-121–Cys-130, Cys-139–Cys-150, Cys-146–Cys-159, Cys-161–Cys-174, Cys-182–Cys-319, and Cys-238–Cys-254. 2 consecutive EGF-like domains span residues 96–131 and 135–175; these read LDHQCDSPCCGHGTCIDGIGSFSCSCDKGWEGKFCQ and RFQD…MRCK. (3R)-3-hydroxyaspartate is present on Asp-112. The region spanning 213 to 449 is the Peptidase S1 domain; that stretch reads VNGTLTKQGD…YLKWIHSYIG (237 aa). The N-linked (GlcNAc...) asparagine glycan is linked to Asn-214. His-253 serves as the catalytic Charge relay system. N-linked (GlcNAc...) asparagine glycosylation occurs at Asn-290. Asp-299 acts as the Charge relay system in catalysis. Asn-354 is a glycosylation site (N-linked (GlcNAc...) asparagine). 2 disulfide bridges follow: Cys-372/Cys-386 and Cys-397/Cys-425. The Charge relay system role is filled by Ser-401.

The protein belongs to the peptidase S1 family. In terms of assembly, synthesized as a single chain precursor, which is cleaved into a light chain and a heavy chain held together by a disulfide bond. The enzyme is then activated by thrombin, which cleaves a tetradecapeptide from the amino end of the heavy chain; this reaction, which occurs at the surface of endothelial cells, is strongly promoted by thrombomodulin. In terms of processing, the vitamin K-dependent, enzymatic carboxylation of some Glu residues allows the modified protein to bind calcium. The iron and 2-oxoglutarate dependent 3-hydroxylation of aspartate and asparagine is (R) stereospecific within EGF domains. Plasma; synthesized in the liver.

The protein localises to the secreted. It localises to the golgi apparatus. It is found in the endoplasmic reticulum. It carries out the reaction Degradation of blood coagulation factors Va and VIIIa.. Its function is as follows. Protein C is a vitamin K-dependent serine protease that regulates blood coagulation by inactivating factors Va and VIIIa in the presence of calcium ions and phospholipids. Exerts a protective effect on the endothelial cell barrier function. This is Vitamin K-dependent protein C (Proc) from Mus musculus (Mouse).